The following is a 329-amino-acid chain: DNA-directed RNA polymerase subunit alpha (329 aa).

Residues 1-235 (MQGSVTEFLK…EQLEAFVDLR (235 aa)) are alpha N-terminal domain (alpha-NTD). The interval 249-329 (FDPILLRPVD…NWPPASIADE (81 aa)) is alpha C-terminal domain (alpha-CTD).

Belongs to the RNA polymerase alpha chain family. As to quaternary structure, homodimer. The RNAP catalytic core consists of 2 alpha, 1 beta, 1 beta' and 1 omega subunit. When a sigma factor is associated with the core the holoenzyme is formed, which can initiate transcription.

It carries out the reaction RNA(n) + a ribonucleoside 5'-triphosphate = RNA(n+1) + diphosphate. Functionally, DNA-dependent RNA polymerase catalyzes the transcription of DNA into RNA using the four ribonucleoside triphosphates as substrates. This chain is DNA-directed RNA polymerase subunit alpha, found in Shigella flexneri serotype 5b (strain 8401).